Here is a 526-residue protein sequence, read N- to C-terminus: MDILQLAPTHLLAILLSSTSALFLITYLLRAGHRPSDLPNGPPTVPLFGNELQVPKSDAHFQFSRWAKEYGGFFTLKRYNNTTIVISDQKLIKTLLDKKSNIYSHRPASLVSHLITQSDHLLVMQYGERWRMLRKTIHQYFMEPRCERDHWKVQEAEAKQMLHDYLTMPEDHMLHPKRYSNSITNSLVFGIRTKTVHDEYMKKLFYLMDKWSLVQELGATPPVDSFALLRYVPQWMLGNWRNRAVEVGDLMQSLYQTVLDQVKERRQRGIQRDSFMDRVLDTLKQTPLSENELRFLGGVLMEGGSDTSSSLILTIIQAMTKYPEVQAKAHAQIDSIIGHNRSPAWSDWSKLPYINMIIKESHRWRPVSPLGVPHAVAEDDHIDGKLIPQGSSIVLNVWGMHHDSDRWQEPEHFQPERFADFPALASGYAGSERRDHLGYGAGRRICPGIHLAERNLIIGIAKLLWAFEFLEPLGSDSDISAHSGASKGFLHCPKDYGCVIRLRSPEKRETIMREFAEAQEVFARFD.

Over 1 to 6 (MDILQL) the chain is Cytoplasmic. Residues 7–29 (APTHLLAILLSSTSALFLITYLL) form a helical membrane-spanning segment. The Lumenal segment spans residues 30–526 (RAGHRPSDLP…EAQEVFARFD (497 aa)). N-linked (GlcNAc...) asparagine glycosylation is present at Asn81. Cys446 is a heme binding site.

The protein belongs to the cytochrome P450 family. The cofactor is heme.

It is found in the endoplasmic reticulum membrane. It carries out the reaction 3-hydroxybenzyl alcohol + reduced [NADPH--hemoprotein reductase] + O2 = gentisyl alcohol + oxidized [NADPH--hemoprotein reductase] + H2O + H(+). The protein operates within mycotoxin biosynthesis; patulin biosynthesis. Its function is as follows. Cytochrome P450 monooxygenase; part of the gene cluster that mediates the biosynthesis of patulin, an acetate-derived tetraketide mycotoxin produced by several fungal species that shows antimicrobial properties against several bacteria. PatI catalyzes the conversion of m-hydroxybenzyl alcohol into gentisyl alcohol. The pathway begins with the synthesis of 6-methylsalicylic acid by the polyketide synthase (PKS) patK via condensation of acetate and malonate units. The 6-methylsalicylic acid decarboxylase patG then catalyzes the decarboxylation of 6-methylsalicylic acid to yield m-cresol (also known as 3-methylphenol). These first reactions occur in the cytosol. The intermediate m-cresol is then transported into the endoplasmic reticulum where the cytochrome P450 monooxygenase patH converts it to m-hydroxybenzyl alcohol, which is further converted to gentisyl alcohol by the cytochrome P450 monooxygenase patI. The oxidoreductases patJ and patO further convert gentisyl alcohol to isoepoxydon in the vacuole. PatN catalyzes then the transformation of isoepoxydon into phyllostine. The cluster protein patF is responsible for the conversion from phyllostine to neopatulin whereas the alcohol dehydrogenase patD converts neopatulin to E-ascladiol. The steps between isoepoxydon and E-ascladiol occur in the cytosol, and E-ascladiol is probably secreted to the extracellular space by one of the cluster-specific transporters patC or patM. Finally, the secreted patulin synthase patE catalyzes the conversion of E-ascladiol to patulin. The chain is Cytochrome P450 monooxygenase patI from Penicillium expansum (Blue mold rot fungus).